The sequence spans 392 residues: Succinate--CoA ligase [ADP-forming] subunit beta (392 aa).

The region spanning 9-236 (RDLFERHGLP…QAAVDPLEQA (228 aa)) is the ATP-grasp domain. Residues Lys45, 52 to 54 (GRG), Ala94, and Glu99 contribute to the ATP site. The Mg(2+) site is built by Asn191 and Asp205. Substrate-binding positions include Asn256 and 318-320 (GIT).

The protein belongs to the succinate/malate CoA ligase beta subunit family. Heterotetramer of two alpha and two beta subunits. Requires Mg(2+) as cofactor.

The catalysed reaction is succinate + ATP + CoA = succinyl-CoA + ADP + phosphate. It carries out the reaction GTP + succinate + CoA = succinyl-CoA + GDP + phosphate. The protein operates within carbohydrate metabolism; tricarboxylic acid cycle; succinate from succinyl-CoA (ligase route): step 1/1. Functionally, succinyl-CoA synthetase functions in the citric acid cycle (TCA), coupling the hydrolysis of succinyl-CoA to the synthesis of either ATP or GTP and thus represents the only step of substrate-level phosphorylation in the TCA. The beta subunit provides nucleotide specificity of the enzyme and binds the substrate succinate, while the binding sites for coenzyme A and phosphate are found in the alpha subunit. This Salinispora arenicola (strain CNS-205) protein is Succinate--CoA ligase [ADP-forming] subunit beta.